The following is a 120-amino-acid chain: Large ribosomal subunit protein uL18 (120 aa).

Residues 1–23 (MKLSRKESVRRRHQRVRRKINGT) form a disordered region. Over residues 8-20 (SVRRRHQRVRRKI) the composition is skewed to basic residues.

The protein belongs to the universal ribosomal protein uL18 family. In terms of assembly, part of the 50S ribosomal subunit; part of the 5S rRNA/L5/L18/L25 subcomplex. Contacts the 5S and 23S rRNAs.

Functionally, this is one of the proteins that bind and probably mediate the attachment of the 5S RNA into the large ribosomal subunit, where it forms part of the central protuberance. The protein is Large ribosomal subunit protein uL18 of Microcystis aeruginosa (strain NIES-843 / IAM M-2473).